The sequence spans 158 residues: Large ribosomal subunit protein uL18 (158 aa).

It belongs to the universal ribosomal protein uL18 family. Part of the 50S ribosomal subunit. Contacts the 5S and 23S rRNAs.

Functionally, this is one of the proteins that bind and probably mediate the attachment of the 5S RNA into the large ribosomal subunit, where it forms part of the central protuberance. In Picrophilus torridus (strain ATCC 700027 / DSM 9790 / JCM 10055 / NBRC 100828 / KAW 2/3), this protein is Large ribosomal subunit protein uL18.